Consider the following 481-residue polypeptide: ATP synthase subunit beta, chloroplastic (481 aa).

ATP is bound at residue Gly-161 to Thr-168.

This sequence belongs to the ATPase alpha/beta chains family. In terms of assembly, F-type ATPases have 2 components, CF(1) - the catalytic core - and CF(0) - the membrane proton channel. CF(1) has five subunits: alpha(3), beta(3), gamma(1), delta(1), epsilon(1). CF(0) has four main subunits: a(1), b(1), b'(1) and c(9-12).

It is found in the plastid. Its subcellular location is the chloroplast thylakoid membrane. The catalysed reaction is ATP + H2O + 4 H(+)(in) = ADP + phosphate + 5 H(+)(out). Functionally, produces ATP from ADP in the presence of a proton gradient across the membrane. The catalytic sites are hosted primarily by the beta subunits. The polypeptide is ATP synthase subunit beta, chloroplastic (Mesostigma viride (Green alga)).